Reading from the N-terminus, the 342-residue chain is N-acetyl-gamma-glutamyl-phosphate reductase (342 aa).

Residue Cys-149 is part of the active site.

This sequence belongs to the NAGSA dehydrogenase family. Type 1 subfamily.

The protein resides in the cytoplasm. It carries out the reaction N-acetyl-L-glutamate 5-semialdehyde + phosphate + NADP(+) = N-acetyl-L-glutamyl 5-phosphate + NADPH + H(+). It participates in amino-acid biosynthesis; L-arginine biosynthesis; N(2)-acetyl-L-ornithine from L-glutamate: step 3/4. Functionally, catalyzes the NADPH-dependent reduction of N-acetyl-5-glutamyl phosphate to yield N-acetyl-L-glutamate 5-semialdehyde. This Cereibacter sphaeroides (strain ATCC 17029 / ATH 2.4.9) (Rhodobacter sphaeroides) protein is N-acetyl-gamma-glutamyl-phosphate reductase.